Reading from the N-terminus, the 187-residue chain is 2-oxoglutarate synthase subunit KorC (187 aa).

As to quaternary structure, heterotetramer of the KorA, KorB, KorC and KorD subunits.

It catalyses the reaction 2 oxidized [2Fe-2S]-[ferredoxin] + 2-oxoglutarate + CoA = succinyl-CoA + 2 reduced [2Fe-2S]-[ferredoxin] + CO2 + H(+). This chain is 2-oxoglutarate synthase subunit KorC (korC), found in Archaeoglobus fulgidus (strain ATCC 49558 / DSM 4304 / JCM 9628 / NBRC 100126 / VC-16).